We begin with the raw amino-acid sequence, 1343 residues long: DNA-directed RNA polymerase subunit beta (1343 aa).

This sequence belongs to the RNA polymerase beta chain family. As to quaternary structure, the RNAP catalytic core consists of 2 alpha, 1 beta, 1 beta' and 1 omega subunit. When a sigma factor is associated with the core the holoenzyme is formed, which can initiate transcription.

The enzyme catalyses RNA(n) + a ribonucleoside 5'-triphosphate = RNA(n+1) + diphosphate. DNA-dependent RNA polymerase catalyzes the transcription of DNA into RNA using the four ribonucleoside triphosphates as substrates. The polypeptide is DNA-directed RNA polymerase subunit beta (Buchnera aphidicola subsp. Cinara cedri (strain Cc)).